A 104-amino-acid polypeptide reads, in one-letter code: NADH-ubiquinone oxidoreductase 12 kDa subunit, mitochondrial (104 aa).

Belongs to the complex I NDUFS6 subunit family. As to quaternary structure, complex I is composed of about 40 different subunits.

The protein localises to the mitochondrion inner membrane. In terms of biological role, accessory subunit of the mitochondrial membrane respiratory chain NADH dehydrogenase (Complex I), that is believed not to be involved in catalysis. Complex I functions in the transfer of electrons from NADH to the respiratory chain. The immediate electron acceptor for the enzyme is believed to be ubiquinone. The chain is NADH-ubiquinone oxidoreductase 12 kDa subunit, mitochondrial (nuo-12.3) from Neurospora crassa (strain ATCC 24698 / 74-OR23-1A / CBS 708.71 / DSM 1257 / FGSC 987).